A 407-amino-acid polypeptide reads, in one-letter code: FMN-dependent alpha-hydroxy acid dehydrogenase PB1A11.03 (407 aa).

Positions 28 to 406 (QRPQITVDGR…DLNRDVLYKE (379 aa)) constitute an FMN hydroxy acid dehydrogenase domain. Tyr-54 lines the a 2-oxocarboxylate pocket. Ser-136 and Gln-158 together coordinate FMN. Tyr-160 is an a 2-oxocarboxylate binding site. Thr-188 contributes to the FMN binding site. Position 197 (Arg-197) interacts with a 2-oxocarboxylate. Lys-277 is a binding site for FMN. Residue His-301 is the Proton acceptor of the active site. Position 304 (Arg-304) interacts with a 2-oxocarboxylate. FMN contacts are provided by residues 332-336 (DSGVR) and 355-356 (GR).

The protein belongs to the FMN-dependent alpha-hydroxy acid dehydrogenase family. FMN serves as cofactor.

The protein resides in the cytoplasm. Its subcellular location is the nucleus. In Schizosaccharomyces pombe (strain 972 / ATCC 24843) (Fission yeast), this protein is FMN-dependent alpha-hydroxy acid dehydrogenase PB1A11.03.